The primary structure comprises 303 residues: Nucleotide-binding protein Dvul_1502 (303 aa).

23-30 (GLSGAGKS) lines the ATP pocket. 75 to 78 (DLRE) provides a ligand contact to GTP.

The protein belongs to the RapZ-like family.

In terms of biological role, displays ATPase and GTPase activities. The polypeptide is Nucleotide-binding protein Dvul_1502 (Nitratidesulfovibrio vulgaris (strain DP4) (Desulfovibrio vulgaris)).